We begin with the raw amino-acid sequence, 508 residues long: Bifunctional purine biosynthesis protein PurH (508 aa).

Residues 1 to 145 (MIKRALLSTY…KNYKDVIVVV (145 aa)) form the MGS-like domain.

It belongs to the PurH family.

The enzyme catalyses (6R)-10-formyltetrahydrofolate + 5-amino-1-(5-phospho-beta-D-ribosyl)imidazole-4-carboxamide = 5-formamido-1-(5-phospho-D-ribosyl)imidazole-4-carboxamide + (6S)-5,6,7,8-tetrahydrofolate. The catalysed reaction is IMP + H2O = 5-formamido-1-(5-phospho-D-ribosyl)imidazole-4-carboxamide. The protein operates within purine metabolism; IMP biosynthesis via de novo pathway; 5-formamido-1-(5-phospho-D-ribosyl)imidazole-4-carboxamide from 5-amino-1-(5-phospho-D-ribosyl)imidazole-4-carboxamide (10-formyl THF route): step 1/1. It participates in purine metabolism; IMP biosynthesis via de novo pathway; IMP from 5-formamido-1-(5-phospho-D-ribosyl)imidazole-4-carboxamide: step 1/1. The chain is Bifunctional purine biosynthesis protein PurH from Petrotoga mobilis (strain DSM 10674 / SJ95).